Reading from the N-terminus, the 165-residue chain is Cyanate hydratase (165 aa).

The interval Met-1–Gly-20 is disordered. Catalysis depends on residues Arg-90, Glu-93, and Ser-116.

Belongs to the cyanase family.

The enzyme catalyses cyanate + hydrogencarbonate + 3 H(+) = NH4(+) + 2 CO2. Functionally, catalyzes the reaction of cyanate with bicarbonate to produce ammonia and carbon dioxide. This Medicago truncatula (Barrel medic) protein is Cyanate hydratase.